The chain runs to 445 residues: 3-phosphoshikimate 1-carboxyvinyltransferase (445 aa).

The interval 1 to 25 (MSGHGPAQPMTARRSGPLKGRAEIP) is disordered. Lys28, Ser29, and Arg33 together coordinate 3-phosphoshikimate. A phosphoenolpyruvate-binding site is contributed by Lys28. Positions 101 and 129 each coordinate phosphoenolpyruvate. The 3-phosphoshikimate site is built by Ser174, Gln176, Asp326, and Lys353. Gln176 is a phosphoenolpyruvate binding site. The active-site Proton acceptor is the Asp326. Phosphoenolpyruvate is bound by residues Arg357 and Arg400.

This sequence belongs to the EPSP synthase family. As to quaternary structure, monomer.

It localises to the cytoplasm. The enzyme catalyses 3-phosphoshikimate + phosphoenolpyruvate = 5-O-(1-carboxyvinyl)-3-phosphoshikimate + phosphate. Its pathway is metabolic intermediate biosynthesis; chorismate biosynthesis; chorismate from D-erythrose 4-phosphate and phosphoenolpyruvate: step 6/7. In terms of biological role, catalyzes the transfer of the enolpyruvyl moiety of phosphoenolpyruvate (PEP) to the 5-hydroxyl of shikimate-3-phosphate (S3P) to produce enolpyruvyl shikimate-3-phosphate and inorganic phosphate. The sequence is that of 3-phosphoshikimate 1-carboxyvinyltransferase from Cereibacter sphaeroides (strain ATCC 17029 / ATH 2.4.9) (Rhodobacter sphaeroides).